Here is a 568-residue protein sequence, read N- to C-terminus: Keratin, type I cytoskeletal 10 (568 aa).

Residues 1 to 15 (MSVRYSSSKQYSSSR) are compositionally biased toward low complexity. The disordered stretch occupies residues 1-31 (MSVRYSSSKQYSSSRSGGGGGGGGGSSFRIS). Positions 1 to 135 (MSVRYSSSKQ…GGDGGLLSGN (135 aa)) are head. Phosphoserine occurs at positions 14, 16, 36, 47, 50, and 160. The span at 16-26 (SGGGGGGGGGS) shows a compositional bias: gly residues. The tract at residues 136–171 (EKVTMQNLNDRLASYLDKVRALEESNYELEGKIKEW) is coil 1A. The region spanning 136–450 (EKVTMQNLND…SLLEGEGSSG (315 aa)) is the IF rod domain. The interval 172-192 (YEKHGNSSQRAPRDYSKYYQT) is linker 1. Residues 193-284 (IEDLKNQILN…KNHEEEMRDL (92 aa)) are coil 1B. The linker 12 stretch occupies residues 285 to 307 (QNVSTGDVNVEMNAAPGVDLTEL). The segment at 308–446 (LNNMRNQYEQ…QTYRSLLEGE (139 aa)) is coil 2. The tail stretch occupies residues 447–568 (GSSGGGGYGG…GESSSKGPRY (122 aa)). A compositionally biased stretch (gly residues) spans 485–546 (GGGSSGGGGH…GGGYGGGSSS (62 aa)). Residues 485–568 (GGGSSGGGGH…GESSSKGPRY (84 aa)) are disordered. Over residues 547–568 (SGGHKSSSSGSVGESSSKGPRY) the composition is skewed to low complexity.

It belongs to the intermediate filament family. As to quaternary structure, heterotetramer of two type I and two type II keratins. Heterodimer with KRT1. Two heterodimers of KRT1 and KRT10 form a heterotetramer. The KRT10 subunit in the heterotetramer is probably disulfide-linked. Expressed in skin.

Its subcellular location is the secreted. It is found in the extracellular space. The protein resides in the cell surface. It localises to the cytoplasm. In terms of biological role, plays a role in the establishment of the epidermal barrier on plantar skin. Involved in the maintenance of cell layer development and keratin filament bundles in suprabasal cells of the epithelium. This is Keratin, type I cytoskeletal 10 from Canis lupus familiaris (Dog).